We begin with the raw amino-acid sequence, 225 residues long: Glucosyl-3-phosphoglycerate phosphatase (225 aa).

R10 provides a ligand contact to substrate. H11 acts as the Tele-phosphohistidine intermediate in catalysis. R60 serves as a coordination point for substrate. The active-site Proton donor/acceptor is E84. H158 contributes to the substrate binding site.

It belongs to the phosphoglycerate mutase family. As to quaternary structure, homodimer.

It carries out the reaction (2R)-2-O-(alpha-D-glucopyranosyl)-3-phospho-glycerate + H2O = (2R)-2-O-(alpha-D-glucopyranosyl)-glycerate + phosphate. In terms of biological role, involved in the biosynthesis of mycobacterial methylglucose lipopolysaccharides (MGLP). Catalyzes the dephosphorylation of glucosyl-3-phosphoglycerate (GPG) to glucosylglycerate. This chain is Glucosyl-3-phosphoglycerate phosphatase, found in Mycolicibacterium vanbaalenii (strain DSM 7251 / JCM 13017 / BCRC 16820 / KCTC 9966 / NRRL B-24157 / PYR-1) (Mycobacterium vanbaalenii).